The following is a 198-amino-acid chain: tRNA (pseudouridine(54)-N(1))-methyltransferase (198 aa).

L128 contacts S-adenosyl-L-methionine.

This sequence belongs to the methyltransferase superfamily. TrmY family. In terms of assembly, homodimer.

Its subcellular location is the cytoplasm. It carries out the reaction pseudouridine(54) in tRNA + S-adenosyl-L-methionine = N(1)-methylpseudouridine(54) in tRNA + S-adenosyl-L-homocysteine + H(+). Specifically catalyzes the N1-methylation of pseudouridine at position 54 (Psi54) in tRNAs. This is tRNA (pseudouridine(54)-N(1))-methyltransferase from Haloferax volcanii (strain ATCC 29605 / DSM 3757 / JCM 8879 / NBRC 14742 / NCIMB 2012 / VKM B-1768 / DS2) (Halobacterium volcanii).